The chain runs to 470 residues: Putative F-box/LRR-repeat protein At3g58920 (470 aa).

One can recognise an F-box domain in the interval 1 to 53 (MDRISNLPNEIICHIVSFLSAKEAAFASVLSKRWQNLFTIVQKLEFDDSVKNQ). 6 LRR repeats span residues 114-142 (KLEI…KLTS), 143-170 (CIFA…FLKS), 173-198 (FSDL…TIYD), 225-250 (FTYF…KYID), 287-312 (EDDP…HLST), and 342-367 (YECF…MIKG).

The protein is Putative F-box/LRR-repeat protein At3g58920 of Arabidopsis thaliana (Mouse-ear cress).